A 249-amino-acid chain; its full sequence is Structural protein VP10 (249 aa).

The protein localises to the virion. Forms the virion spike 'foot' and helps anchor the VP9 spike 'head' protein in the virion. This chain is Structural protein VP10 (Segment-10), found in Banna virus (BAV).